The sequence spans 297 residues: Tyrosine recombinase XerD (297 aa).

The region spanning 1-86 (MKNLALIDLF…AMRKLFQYLY (86 aa)) is the Core-binding (CB) domain. A Tyr recombinase domain is found at 107-291 (RLPKYLTEQQ…AKERLKRLHE (185 aa)). Residues R147, K171, H243, R246, and H269 contribute to the active site. Y278 (O-(3'-phospho-DNA)-tyrosine intermediate) is an active-site residue.

It belongs to the 'phage' integrase family. XerD subfamily. Forms a cyclic heterotetrameric complex composed of two molecules of XerC and two molecules of XerD.

The protein localises to the cytoplasm. Site-specific tyrosine recombinase, which acts by catalyzing the cutting and rejoining of the recombining DNA molecules. The XerC-XerD complex is essential to convert dimers of the bacterial chromosome into monomers to permit their segregation at cell division. It also contributes to the segregational stability of plasmids. The chain is Tyrosine recombinase XerD from Haemophilus influenzae (strain ATCC 51907 / DSM 11121 / KW20 / Rd).